Reading from the N-terminus, the 683-residue chain is DNA ligase (683 aa).

NAD(+)-binding positions include 43 to 47 (DAEYD), 92 to 93 (SL), and E125. K127 acts as the N6-AMP-lysine intermediate in catalysis. R148, E185, K303, and K327 together coordinate NAD(+). The Zn(2+) site is built by C421, C424, C439, and C445. In terms of domain architecture, BRCT spans 604–683 (IADNPLKGKN…QEFIALTGEN (80 aa)).

Belongs to the NAD-dependent DNA ligase family. LigA subfamily. The cofactor is Mg(2+). Requires Mn(2+) as cofactor.

The enzyme catalyses NAD(+) + (deoxyribonucleotide)n-3'-hydroxyl + 5'-phospho-(deoxyribonucleotide)m = (deoxyribonucleotide)n+m + AMP + beta-nicotinamide D-nucleotide.. Functionally, DNA ligase that catalyzes the formation of phosphodiester linkages between 5'-phosphoryl and 3'-hydroxyl groups in double-stranded DNA using NAD as a coenzyme and as the energy source for the reaction. It is essential for DNA replication and repair of damaged DNA. In Actinobacillus pleuropneumoniae serotype 5b (strain L20), this protein is DNA ligase.